The chain runs to 452 residues: Transcription factor ETV6 (452 aa).

A compositionally biased stretch (polar residues) spans 1–10 (MSETPAQCSI). The disordered stretch occupies residues 1–30 (MSETPAQCSIKQERISYTPPESPVPSYASS). The residue at position 11 (K11) is an N6-acetyllysine; alternate. K11 is covalently cross-linked (Glycyl lysine isopeptide (Lys-Gly) (interchain with G-Cter in SUMO2); alternate). T18 is modified (phosphothreonine). S22 carries the phosphoserine modification. The PNT domain maps to 40-124 (ALRMEEDSIR…ELLQHILKQR (85 aa)). The disordered stretch occupies residues 158–262 (VQRTPRPSVD…PKPSSPRQES (105 aa)). S213 and S238 each carry phosphoserine. A compositionally biased stretch (polar residues) spans 230–250 (QESYPLSVSPMENNHCPASSE). S257 is subject to Phosphoserine; by MAPK14. K288 participates in a covalent cross-link: Glycyl lysine isopeptide (Lys-Gly) (interchain with G-Cter in SUMO2). Position 302 is an N6-acetyllysine; alternate (K302). A Glycyl lysine isopeptide (Lys-Gly) (interchain with G-Cter in SUMO2); alternate cross-link involves residue K302. S323 carries the post-translational modification Phosphoserine. Positions 339-420 (RLLWDYVYQL…PGQRLLFRFM (82 aa)) form a DNA-binding region, ETS. Glycyl lysine isopeptide (Lys-Gly) (interchain with G-Cter in SUMO2) cross-links involve residues K403 and K421.

It belongs to the ETS family. Can form homodimers or heterodimers with TEL2 or FLI1. Interacts with L3MBTL1 and HDAC9. In terms of processing, phosphorylation of Ser-257 by MAPK14 (p38) inhibits ETV6 transcriptional repression. As to expression, ubiquitous.

The protein resides in the nucleus. Transcriptional repressor; binds to the DNA sequence 5'-CCGGAAGT-3'. Plays a role in hematopoiesis and malignant transformation. This chain is Transcription factor ETV6 (ETV6), found in Homo sapiens (Human).